The chain runs to 130 residues: Small ribosomal subunit protein eS6 (130 aa).

The protein belongs to the eukaryotic ribosomal protein eS6 family.

The protein is Small ribosomal subunit protein eS6 of Methanosphaera stadtmanae (strain ATCC 43021 / DSM 3091 / JCM 11832 / MCB-3).